Consider the following 298-residue polypeptide: tRNA(Met) cytidine acetate ligase (298 aa).

Residues 6–19 (IAEY…HIYQ), glycine 100, asparagine 157, and arginine 182 each bind ATP.

This sequence belongs to the TmcAL family.

The protein resides in the cytoplasm. It catalyses the reaction cytidine(34) in elongator tRNA(Met) + acetate + ATP = N(4)-acetylcytidine(34) in elongator tRNA(Met) + AMP + diphosphate. Its function is as follows. Catalyzes the formation of N(4)-acetylcytidine (ac(4)C) at the wobble position of elongator tRNA(Met), using acetate and ATP as substrates. First activates an acetate ion to form acetyladenylate (Ac-AMP) and then transfers the acetyl group to tRNA to form ac(4)C34. The sequence is that of tRNA(Met) cytidine acetate ligase from Mycoplasmopsis pulmonis (strain UAB CTIP) (Mycoplasma pulmonis).